The primary structure comprises 362 residues: Peptide chain release factor 1 (362 aa).

Gln-236 carries the post-translational modification N5-methylglutamine.

It belongs to the prokaryotic/mitochondrial release factor family. Methylated by PrmC. Methylation increases the termination efficiency of RF1.

It is found in the cytoplasm. Its function is as follows. Peptide chain release factor 1 directs the termination of translation in response to the peptide chain termination codons UAG and UAA. This Lactobacillus gasseri (strain ATCC 33323 / DSM 20243 / BCRC 14619 / CIP 102991 / JCM 1131 / KCTC 3163 / NCIMB 11718 / NCTC 13722 / AM63) protein is Peptide chain release factor 1.